The sequence spans 105 residues: Protein FAM24A (105 aa).

Residues 1 to 32 form the signal peptide; that stretch reads MAKMFDLRTKIMIGIGSSLLVAAMVLLSVVFC.

The protein belongs to the FAM24 family.

The protein resides in the secreted. This Homo sapiens (Human) protein is Protein FAM24A (FAM24A).